The following is an 886-amino-acid chain: Leucine-rich repeat-containing protein sog2 (886 aa).

LRR repeat units follow at residues 28–49 (NALT…QLER), 53–74 (RIAR…ILKF), 76–97 (RLRY…LCRL), 99–120 (SLEI…FGAL), 122–143 (NLKV…IAHM), and 145–166 (NLEI…IANN). Disordered regions lie at residues 236-288 (SPGM…THPP), 301-364 (SPRQ…ASPI), 394-431 (PTQL…STRL), and 455-483 (RIFA…TNDS). The span at 243-277 (VTPSPHSHSPAGHQQSTPKSTLSKTNENSEGTLYD) shows a compositional bias: polar residues. Ser-301 carries the phosphoserine modification. Polar residues-rich tracts occupy residues 312–347 (SLAT…SSVA), 394–406 (PTQL…TSAI), and 419–431 (SNST…STRL). At Ser-464 the chain carries Phosphoserine.

The protein resides in the cytoplasm. It is found in the nucleus. This chain is Leucine-rich repeat-containing protein sog2, found in Schizosaccharomyces pombe (strain 972 / ATCC 24843) (Fission yeast).